The sequence spans 150 residues: Ribonuclease H (150 aa).

Residues 1–142 form the RNase H type-1 domain; that stretch reads MSDSVEIFTD…ADQLANRGVD (142 aa). Residues D10, E48, D70, and D134 each coordinate Mg(2+).

This sequence belongs to the RNase H family. Monomer. Requires Mg(2+) as cofactor.

Its subcellular location is the cytoplasm. The enzyme catalyses Endonucleolytic cleavage to 5'-phosphomonoester.. Its function is as follows. Endonuclease that specifically degrades the RNA of RNA-DNA hybrids. This chain is Ribonuclease H, found in Pseudomonas fluorescens (strain ATCC BAA-477 / NRRL B-23932 / Pf-5).